The sequence spans 479 residues: Deoxyribodipyrimidine photo-lyase (479 aa).

The Photolyase/cryptochrome alpha/beta domain occupies 6–132 (APVIVWFRKD…TVRSFSGQLL (127 aa)). Position 226 (Tyr226) interacts with FAD. Arg230 lines the DNA pocket. Residues 238–242 (TSLLS) and 277–284 (EIVWREFC) each bind FAD. 2 interaction with DNA regions span residues 277-284 (EIVWREFC) and 343-344 (NR). 374-376 (DAD) is a binding site for FAD. Gln406 contacts DNA.

This sequence belongs to the DNA photolyase class-3 family. The cofactor is FAD. (6R)-5,10-methylene-5,6,7,8-tetrahydrofolate is required as a cofactor.

The catalysed reaction is cyclobutadipyrimidine (in DNA) = 2 pyrimidine residues (in DNA).. Its function is as follows. Photolyase involved in the repair of UV radiation-induced DNA damage. By using blue-light energy, catalyzes the photoreactivation of cyclobutane pyrimidine dimers (CPDs), which are formed between adjacent bases on the same DNA strand upon exposure to ultraviolet radiation. Can repair CPD lesions in ssDNA as well as in dsDNA. This Agrobacterium fabrum (strain C58 / ATCC 33970) (Agrobacterium tumefaciens (strain C58)) protein is Deoxyribodipyrimidine photo-lyase.